We begin with the raw amino-acid sequence, 581 residues long: Netrin-3 (581 aa).

The first 15 residues, 1-15 (LRLLLTTSVLRLARA), serve as a signal peptide directing secretion. Residues 35-261 (APRRCIPEFV…SVGELQVGGR (227 aa)) enclose the Laminin N-terminal domain. N-linked (GlcNAc...) asparagine glycans are attached at residues asparagine 88 and asparagine 103. Disulfide bonds link cysteine 91–cysteine 124, cysteine 262–cysteine 271, cysteine 264–cysteine 281, cysteine 283–cysteine 292, cysteine 295–cysteine 315, cysteine 318–cysteine 327, cysteine 320–cysteine 345, cysteine 348–cysteine 357, cysteine 360–cysteine 378, cysteine 381–cysteine 393, cysteine 383–cysteine 400, cysteine 402–cysteine 411, cysteine 414–cysteine 428, cysteine 449–cysteine 521, and cysteine 468–cysteine 578. Laminin EGF-like domains lie at 262-317 (CKCN…ECLA), 318-380 (CNCN…ACKA), and 381-430 (CDCH…PCIK). An N-linked (GlcNAc...) asparagine glycan is attached at asparagine 394. In terms of domain architecture, NTR spans 449 to 578 (CDSYCKPAKG…LQRREKKGKC (130 aa)). Residues 507 to 509 (RGD) carry the Cell attachment site motif. N-linked (GlcNAc...) asparagine glycosylation is present at asparagine 540.

The protein resides in the secreted. Its subcellular location is the extracellular space. It localises to the extracellular matrix. In terms of biological role, netrins control guidance of CNS commissural axons and peripheral motor axons. This chain is Netrin-3 (NTN3), found in Gallus gallus (Chicken).